The chain runs to 127 residues: Small ribosomal subunit protein uS12 (127 aa).

Asp89 is subject to 3-methylthioaspartic acid. The interval 104 to 127 (TQGVKDRKQARSKYGTKRAKAGKK) is disordered. A compositionally biased stretch (basic residues) spans 113-127 (ARSKYGTKRAKAGKK).

Belongs to the universal ribosomal protein uS12 family. As to quaternary structure, part of the 30S ribosomal subunit. Contacts proteins S8 and S17. May interact with IF1 in the 30S initiation complex.

Its function is as follows. With S4 and S5 plays an important role in translational accuracy. Functionally, interacts with and stabilizes bases of the 16S rRNA that are involved in tRNA selection in the A site and with the mRNA backbone. Located at the interface of the 30S and 50S subunits, it traverses the body of the 30S subunit contacting proteins on the other side and probably holding the rRNA structure together. The combined cluster of proteins S8, S12 and S17 appears to hold together the shoulder and platform of the 30S subunit. The polypeptide is Small ribosomal subunit protein uS12 (Herminiimonas arsenicoxydans).